A 303-amino-acid chain; its full sequence is Ribosomal protein uL3 glutamine methyltransferase (303 aa).

The protein belongs to the protein N5-glutamine methyltransferase family. PrmB subfamily.

The enzyme catalyses L-glutaminyl-[ribosomal protein uL3] + S-adenosyl-L-methionine = N(5)-methyl-L-glutaminyl-[ribosomal protein uL3] + S-adenosyl-L-homocysteine + H(+). Functionally, methylates large ribosomal subunit protein uL3 on a specific glutamine residue. The chain is Ribosomal protein uL3 glutamine methyltransferase from Neisseria meningitidis serogroup B (strain ATCC BAA-335 / MC58).